The following is a 270-amino-acid chain: MDPINQRIGDMLARIRATRPLIHHITNLVVMNDTANVTLHVGGLPVMAHDAEEVAEMVAHAGALVLNVGTLSPDWIESMLIAGRRANELQTPVVLDPVGAGATQLRTRTNLELLRSLRIAVVRGNGGEIGALSGEGGEVKGVESVSGPEDPLTAARRLAQTYHTVVALTGARDIITDGERVLTVNNGHIWLTTLTGTGCMATTMVAAFAAVERDYLLAAAGGLAMFGLAAELAAEKAHGPASFKVALFDQIYNLTPEQVANGARVVEGGS.

Met47 serves as a coordination point for substrate. The ATP site is built by Arg123 and Thr169. Gly196 contributes to the substrate binding site.

This sequence belongs to the Thz kinase family. Mg(2+) is required as a cofactor.

The enzyme catalyses 5-(2-hydroxyethyl)-4-methylthiazole + ATP = 4-methyl-5-(2-phosphooxyethyl)-thiazole + ADP + H(+). Its pathway is cofactor biosynthesis; thiamine diphosphate biosynthesis; 4-methyl-5-(2-phosphoethyl)-thiazole from 5-(2-hydroxyethyl)-4-methylthiazole: step 1/1. Its function is as follows. Catalyzes the phosphorylation of the hydroxyl group of 4-methyl-5-beta-hydroxyethylthiazole (THZ). The sequence is that of Hydroxyethylthiazole kinase from Roseiflexus sp. (strain RS-1).